A 578-amino-acid chain; its full sequence is Putative transporter B0361.11 (578 aa).

Positions 1–30 (MSISRRSYEQFDEMKSENQENNSKKKSSER) are disordered. 11 consecutive transmembrane segments (helical) span residues 51–71 (IFTYVLVQTLNFFYSSSMYIM), 148–168 (FGLTIFTIGAVIAVPFMSMLA), 182–202 (ILAFLANMAASFSPNFAIFLI), 232–252 (AWITVVYNVAWSLGMVWTLLV), 263–283 (YFIVSLPGVYGFALWYFLPES), 339–359 (IWLLFANGFIEMVISLVYFAI), 373–393 (AFLYSSLIEIPAGLAVIPLMM), 399–419 (MIVIWCLVFQTLALIGVTVFL), 426–446 (LVIMLVAKVMATIIYSVHPIW), 457–477 (SLCFSLMNIPQSMGIIMSPYV), and 486–506 (WIPFVVIALFSFISATLAFML). Low complexity predominate over residues 532–550 (AYRRSKSSSSSVSALSKTS). The tract at residues 532–561 (AYRRSKSSSSSVSALSKTSVRSKKTLSSES) is disordered.

It belongs to the major facilitator superfamily. Sugar transporter (TC 2.A.1.1) family.

Its subcellular location is the membrane. The sequence is that of Putative transporter B0361.11 from Caenorhabditis elegans.